The following is a 185-amino-acid chain: Elongation factor P (185 aa).

It belongs to the elongation factor P family.

Its subcellular location is the cytoplasm. It participates in protein biosynthesis; polypeptide chain elongation. Involved in peptide bond synthesis. Stimulates efficient translation and peptide-bond synthesis on native or reconstituted 70S ribosomes in vitro. Probably functions indirectly by altering the affinity of the ribosome for aminoacyl-tRNA, thus increasing their reactivity as acceptors for peptidyl transferase. In Burkholderia multivorans (strain ATCC 17616 / 249), this protein is Elongation factor P.